We begin with the raw amino-acid sequence, 570 residues long: Keratin, type I cytoskeletal 10 (570 aa).

Low complexity predominate over residues 1 to 16 (MSVLYSSSSKQFSSSR). Positions 1–29 (MSVLYSSSSKQFSSSRSGGGGGGGSVRVS) are disordered. Residues 1-143 (MSVLYSSSSK…GDGGSLLSGN (143 aa)) are head. Phosphoserine is present on residues Ser-15 and Ser-17. Arg-32 bears the Asymmetric dimethylarginine; alternate mark. The residue at position 32 (Arg-32) is an Omega-N-methylarginine; alternate. Residues Ser-34, Ser-45, Ser-48, and Ser-168 each carry the phosphoserine modification. Residues 144 to 179 (GRVTMQNLNDRLASYMDKVRALEESNYELEGKIKEW) form a coil 1A region. Positions 144–458 (GRVTMQNLND…SLLEGEGSSS (315 aa)) constitute an IF rod domain. The segment at 180 to 200 (YEKHGNSSQREPRDYSKYYKT) is linker 1. Residues 201 to 292 (IEDLKGQILT…KNHEEEMRDL (92 aa)) are coil 1B. Positions 293–315 (QNVSTGDVNVEMNAAPGVDLTQL) are linker 12. A coil 2 region spans residues 316–454 (LNNMRNQYEQ…QTYRSLLEGE (139 aa)). The tract at residues 451-570 (LEGEGSSSGG…GDQSSKGPRY (120 aa)) is disordered. The tail stretch occupies residues 455–570 (GSSSGGGGGR…GDQSSKGPRY (116 aa)). A compositionally biased stretch (gly residues) spans 456–562 (SSSGGGGGRR…GGFKSSGGGD (107 aa)).

This sequence belongs to the intermediate filament family. (Microbial infection) Interacts (via C-terminal tail domain) with the S.aureus clumping factor, clfB; this interaction probably mediates S.aureus attachment to the highly keratinized squamous epithelial cells from the nasal cavity. As to quaternary structure, heterotetramer of two type I and two type II keratins. Heterodimer with KRT1. Two heterodimers of KRT1 and KRT10 form a heterotetramer. The KRT10 subunit in the heterotetramer is probably disulfide-linked. Interacts with PLEC isoform 1C, when in a heterodimer with KRT1. In terms of assembly, (Microbial infection) Interacts (via the C-terminal tail domain) with S.pneumoniae serine-rich repeat protein PsrP; this interaction probably mediates S.pneumoniae adherence to lung tissue and subsequent pathogenesis. As to expression, expressed in the suprabasal layers of the epidermis throughout the entire sole (at protein level). Expressed in the infundibular regions of the ear, the interscale regions of the tail, and the interfollicular epidermis of the back. Expressed in lung tissue from young mice (at protein level).

It localises to the secreted. The protein resides in the extracellular space. It is found in the cell surface. Its subcellular location is the cytoplasm. Functionally, plays a role in the establishment of the epidermal barrier on plantar skin. Involved in the maintenance of cell layer development and keratin filament bundles in suprabasal cells of the epithelium. (Microbial infection) Acts as a mediator of S.aureus adherence to desquamated nasal epithelial cells via clfB, and hence may play a role in nasal colonization. Its function is as follows. (Microbial infection) Binds S.pneumoniae PsrP, mediating adherence of the bacteria to lung cell lines. The chain is Keratin, type I cytoskeletal 10 (Krt10) from Mus musculus (Mouse).